The primary structure comprises 327 residues: Pyruvate dehydrogenase E1 component subunit beta (327 aa).

E63 serves as a coordination point for thiamine diphosphate.

Heterodimer of an alpha and a beta chain. The cofactor is thiamine diphosphate.

The catalysed reaction is N(6)-[(R)-lipoyl]-L-lysyl-[protein] + pyruvate + H(+) = N(6)-[(R)-S(8)-acetyldihydrolipoyl]-L-lysyl-[protein] + CO2. The pyruvate dehydrogenase complex catalyzes the overall conversion of pyruvate to acetyl-CoA and CO(2). It contains multiple copies of three enzymatic components: pyruvate dehydrogenase (E1), dihydrolipoamide acetyltransferase (E2) and lipoamide dehydrogenase (E3). The chain is Pyruvate dehydrogenase E1 component subunit beta (pdhB) from Mycoplasma pneumoniae (strain ATCC 29342 / M129 / Subtype 1) (Mycoplasmoides pneumoniae).